A 445-amino-acid chain; its full sequence is Inward rectifier potassium channel 4 (445 aa).

The Cytoplasmic portion of the chain corresponds to Met1 to Trp55. A helical transmembrane segment spans residues Arg56 to Ile80. At Ala81–Gly119 the chain is on the extracellular side. Positions Phe120–Gln131 form an intramembrane region, helical; Pore-forming. Residues Thr132–Phe138 constitute an intramembrane region (pore-forming). Residues Thr133–Phe138 carry the Selectivity filter motif. The Extracellular segment spans residues Arg139–Leu147. The chain crosses the membrane as a helical span at residues Ala148–Thr169. The Cytoplasmic segment spans residues Ile170–Ile445. A PDZ-binding motif is present at residues Ser443–Ile445.

This sequence belongs to the inward rectifier-type potassium channel (TC 1.A.2.1) family. KCNJ4 subfamily. In terms of assembly, homomultimeric and heteromultimeric association with KCNJ2 and KCNJ12. Interacts with DLG2 and DLG4. Associates, via its PDZ-recognition domain, with a complex containing LIN7A, LIN7B, LIN7C, DLG1, CASK and APBA1. Interacts with TAX1BP3. TAX1BP3 competes with LIN7 family members for KCNJ4 binding. Highly expressed in the forebrain, moderately in skeletal muscle. Im olfactory bulb, specifically expressed at the postsynaptic membrane of dendritic spines of granule cells.

Its subcellular location is the cell membrane. It is found in the postsynaptic cell membrane. The protein resides in the cytoplasmic vesicle membrane. It catalyses the reaction K(+)(in) = K(+)(out). Inward rectifier potassium channels are characterized by a greater tendency to allow potassium to flow into the cell rather than out of it. Their voltage dependence is regulated by the concentration of extracellular potassium; as external potassium is raised, the voltage range of the channel opening shifts to more positive voltages. The inward rectification is mainly due to the blockage of outward current by internal magnesium. Can be blocked by extracellular barium and cesium. This Mus musculus (Mouse) protein is Inward rectifier potassium channel 4 (Kcnj4).